The primary structure comprises 515 residues: tRNA-2-methylthio-N(6)-dimethylallyladenosine synthase (515 aa).

Residues 25–140 (KTYQVRTFGC…LPALLNRARH (116 aa)) enclose the MTTase N-terminal domain. C34, C69, C103, C177, C181, and C184 together coordinate [4Fe-4S] cluster. The region spanning 163 to 393 (RDSVYAGWVS…TALQDRIAAE (231 aa)) is the Radical SAM core domain. Positions 396-466 (AKQLGRKVEV…AFHLVADPAG (71 aa)) constitute a TRAM domain. Residues 482–515 (DRSQADSCGVPAAGAASGKAGVSLGMPSLPTRRA) are disordered. Residues 490-506 (GVPAAGAASGKAGVSLG) are compositionally biased toward low complexity.

This sequence belongs to the methylthiotransferase family. MiaB subfamily. In terms of assembly, monomer. [4Fe-4S] cluster serves as cofactor.

The protein resides in the cytoplasm. The catalysed reaction is N(6)-dimethylallyladenosine(37) in tRNA + (sulfur carrier)-SH + AH2 + 2 S-adenosyl-L-methionine = 2-methylsulfanyl-N(6)-dimethylallyladenosine(37) in tRNA + (sulfur carrier)-H + 5'-deoxyadenosine + L-methionine + A + S-adenosyl-L-homocysteine + 2 H(+). Functionally, catalyzes the methylthiolation of N6-(dimethylallyl)adenosine (i(6)A), leading to the formation of 2-methylthio-N6-(dimethylallyl)adenosine (ms(2)i(6)A) at position 37 in tRNAs that read codons beginning with uridine. The chain is tRNA-2-methylthio-N(6)-dimethylallyladenosine synthase from Paenarthrobacter aurescens (strain TC1).